A 405-amino-acid polypeptide reads, in one-letter code: Formate-dependent phosphoribosylglycinamide formyltransferase (405 aa).

N(1)-(5-phospho-beta-D-ribosyl)glycinamide-binding positions include 22–23 (EL) and glutamate 82. Residues arginine 115, lysine 162, 167–172 (SSGKGQ), 202–205 (EGFI), and glutamate 210 each bind ATP. Residues 120-320 (RLAAETLGLA…EFELHARAIL (201 aa)) enclose the ATP-grasp domain. Mg(2+) contacts are provided by glutamate 279 and glutamate 291. N(1)-(5-phospho-beta-D-ribosyl)glycinamide is bound by residues aspartate 298, lysine 367, and 374-375 (RR).

It belongs to the PurK/PurT family. Homodimer.

It carries out the reaction N(1)-(5-phospho-beta-D-ribosyl)glycinamide + formate + ATP = N(2)-formyl-N(1)-(5-phospho-beta-D-ribosyl)glycinamide + ADP + phosphate + H(+). It functions in the pathway purine metabolism; IMP biosynthesis via de novo pathway; N(2)-formyl-N(1)-(5-phospho-D-ribosyl)glycinamide from N(1)-(5-phospho-D-ribosyl)glycinamide (formate route): step 1/1. Its function is as follows. Involved in the de novo purine biosynthesis. Catalyzes the transfer of formate to 5-phospho-ribosyl-glycinamide (GAR), producing 5-phospho-ribosyl-N-formylglycinamide (FGAR). Formate is provided by PurU via hydrolysis of 10-formyl-tetrahydrofolate. This is Formate-dependent phosphoribosylglycinamide formyltransferase from Delftia acidovorans (strain DSM 14801 / SPH-1).